We begin with the raw amino-acid sequence, 78 residues long: Acyl carrier protein 1 (78 aa).

The Carrier domain maps to 2–77 (STIEERVKKI…EAIDYIVAHQ (76 aa)). Residue serine 37 is modified to O-(pantetheine 4'-phosphoryl)serine.

This sequence belongs to the acyl carrier protein (ACP) family. 4'-phosphopantetheine is transferred from CoA to a specific serine of apo-ACP by AcpS. This modification is essential for activity because fatty acids are bound in thioester linkage to the sulfhydryl of the prosthetic group.

Its subcellular location is the cytoplasm. Its pathway is lipid metabolism; fatty acid biosynthesis. Carrier of the growing fatty acid chain in fatty acid biosynthesis. This is Acyl carrier protein 1 from Pseudomonas aeruginosa (strain ATCC 15692 / DSM 22644 / CIP 104116 / JCM 14847 / LMG 12228 / 1C / PRS 101 / PAO1).